Reading from the N-terminus, the 466-residue chain is MASEGDKLMGGRFVGSTDPIMQMLSTSISTEQRLSEVDIQASIAYAKALEKAGILTKTELEKILSGLEKISEELSKGVIVVTQSDEDIQTANERRLKELIGDIAGKLHTGRSRNEQVVTDLKLFMKNSLSIISTHLLQLIKTLVERAAIEIDVILPGYTHLQKAQPIRWSQFLLSHAVALTRDSERLGEVKKRINVLPLGSGALAGNPLDIDREMLRSELEFASISLNSMDAISERDFVVEFLSVATLLLIHLSKMAEDLIIYSTSEFGFLTLSDAFSTGSSLMPQKKNPDSLELIRSKAGRVFGRLASILMVLKGLPSTYNKDLQEDKEAVIDVVDTLTAVLQVATGVISTLQISKENMEKALTPEMLATDLALYLVRKGMPFRQAHTASGKAVHLAETKGIAINNLTLEDLKSISPLFSSDVSQVFNFVNSVEQYTALGGTAKSSVTTQIEQLRELMKKQKEQA.

This sequence belongs to the lyase 1 family. Argininosuccinate lyase subfamily. In terms of assembly, homotetramer. In terms of tissue distribution, eye lens.

Functionally, delta crystallin, the principal crystallin in embryonic lens, is found only in birds and reptiles. Despite possessing the necessary catalytic residues, this protein does not function as an enzymatically active argininosuccinate lyase. The protein is Delta-1 crystallin (ASL1) of Anas platyrhynchos (Mallard).